The primary structure comprises 242 residues: Probable L-ribulose-5-phosphate 4-epimerase UlaF (242 aa).

Residues 31 to 32, 48 to 49, and 78 to 79 contribute to the substrate site; these read GN, SG, and SS. D80, H99, and H101 together coordinate Zn(2+). The active-site Proton donor/acceptor is the D124. Position 175 (H175) interacts with Zn(2+). Y234 (proton donor/acceptor) is an active-site residue.

It belongs to the aldolase class II family. AraD/FucA subfamily. It depends on Zn(2+) as a cofactor.

The enzyme catalyses L-ribulose 5-phosphate = D-xylulose 5-phosphate. It functions in the pathway cofactor degradation; L-ascorbate degradation; D-xylulose 5-phosphate from L-ascorbate: step 4/4. Catalyzes the isomerization of L-ribulose 5-phosphate to D-xylulose 5-phosphate. Is involved in the anaerobic L-ascorbate utilization. The protein is Probable L-ribulose-5-phosphate 4-epimerase UlaF of Mycoplasma pneumoniae (strain ATCC 29342 / M129 / Subtype 1) (Mycoplasmoides pneumoniae).